The following is a 507-amino-acid chain: RNA-binding protein MEX3B (507 aa).

Positions 1–22 (MPSSLFADMERNGSGGGGGETL) are disordered. KH domains follow at residues 59–120 (MTEC…RREI) and 155–216 (QTTI…REEI). Disordered regions lie at residues 256 to 279 (NQSS…LGSA) and 426 to 450 (SSSS…GMRR). Residues 426–446 (SSSSSSSSSSSSSSSSSSSSS) show a composition bias toward low complexity. The RING-type zinc finger occupies 456-496 (CSICFESEVIAALVPCGHNLFCMECANRICEKNQPQCPVCH).

The protein resides in the cytoplasm. It localises to the nucleus. Its subcellular location is the cytoplasmic granule. The protein localises to the P-body. Functionally, RNA-binding protein. May be involved in post-transcriptional regulatory mechanisms. The protein is RNA-binding protein MEX3B (mex3b) of Xenopus laevis (African clawed frog).